The sequence spans 4981 residues: Protocadherin Fat 4 (4981 aa).

Positions 1-42 are cleaved as a signal peptide; the sequence is MNLAANRAPGRRRLPLPSPSLCQLLRVWGLLSLLPGSARVQA. Over 43–4505 the chain is Extracellular; sequence AEQRQVFQVM…PDEISLPLWA (4463 aa). Cadherin domains are found at residues 44-135, 136-250, 251-353, 359-475, 476-582, 584-689, 690-793, 794-893, 894-996, 997-1100, 1101-1210, 1211-1315, 1316-1420, 1421-1529, 1529-1629, 1630-1740, 1741-1841, 1842-1944, 1945-2051, 2051-2154, 2155-2259, 2260-2364, 2365-2468, 2469-2569, 2570-2671, 2672-2775, 2775-2874, 2875-2985, 2986-3091, 3092-3196, 3197-3300, 3301-3406, 3407-3512, and 3511-3622; these read EQRQ…APVF, PDPS…PPVF, GSSH…DPVV, PATS…PPVF, EQQV…KPVF, QPEG…SPVF, YPVQ…PPVF, SQAA…APHF, LQAV…PPVF, DQIS…RPLF, NSTN…APKF, LKDF…TPSF, PKST…PPSF, PPGD…VPMF, FISQ…GPVF, TQTK…PPVF, PTDT…TPRF, SRPV…PPVF, SMSS…PPMF, FLSP…NPVF, AQAM…VPVF, ELSP…VPTF, ANNM…PPRF, QHHP…FPKV, RAKE…APTF, EEDP…APRF, FSQI…TPRF, SRPS…PPQF, LQNK…TPEF, SQNH…SPVF, VPDE…VPRF, VSKL…PPVF, SLST…GPVL, and VLTV…VEIF. 2 N-linked (GlcNAc...) asparagine glycosylation sites follow: asparagine 84 and asparagine 237. N-linked (GlcNAc...) asparagine glycosylation is found at asparagine 393, asparagine 416, asparagine 435, asparagine 483, asparagine 551, asparagine 615, asparagine 676, asparagine 721, asparagine 825, asparagine 880, asparagine 948, asparagine 1085, asparagine 1101, asparagine 1104, asparagine 1225, asparagine 1296, asparagine 1389, and asparagine 1514. N-linked (GlcNAc...) asparagine glycans are attached at residues asparagine 1828, asparagine 1899, asparagine 1967, and asparagine 2119. Residues asparagine 2387 and asparagine 2432 are each glycosylated (N-linked (GlcNAc...) asparagine). 7 N-linked (GlcNAc...) asparagine glycosylation sites follow: asparagine 2923, asparagine 2939, asparagine 3038, asparagine 3142, asparagine 3219, asparagine 3394, and asparagine 3479. Residues asparagine 3708 and asparagine 3760 are each glycosylated (N-linked (GlcNAc...) asparagine). Residues 3804 to 3862 enclose the EGF-like 1 domain; it reads DHDPCIHGPCQNGGSCLRRLAVGSALKIQESLPVIIVANEPLQPSQCKCVPGYAGSWCE. Intrachain disulfides connect cysteine 3808/cysteine 3819, cysteine 3813/cysteine 3850, cysteine 3852/cysteine 3861, cysteine 3868/cysteine 3879, cysteine 3873/cysteine 3888, cysteine 3890/cysteine 3899, cysteine 3906/cysteine 3917, cysteine 3911/cysteine 3926, cysteine 3928/cysteine 3937, cysteine 3944/cysteine 3955, cysteine 3949/cysteine 3964, and cysteine 3966/cysteine 3975. The EGF-like 2; calcium-binding domain occupies 3864–3900; sequence DIDECLPAPCHNGGTCHNLVGGFSCSCPEGFTGRACE. The region spanning 3902–3938 is the EGF-like 3; calcium-binding domain; sequence DINECLPSPCKHGAVCQNFPGGFNCVCKTGYTGKMCE. One can recognise an EGF-like 4 domain in the interval 3940 to 3976; sequence SVNYCECNPCFNGGSCQSGVESYYCHCPFGVFGKHCE. Residues 3977–4161 enclose the Laminin G-like 1 domain; that stretch reads LNSYGFEELS…LAAQGILDQC (185 aa). Asparagine 4019 carries N-linked (GlcNAc...) asparagine glycosylation. Cystine bridges form between cysteine 4135-cysteine 4161, cysteine 4168-cysteine 4179, cysteine 4173-cysteine 4188, and cysteine 4190-cysteine 4199. One can recognise an EGF-like 5 domain in the interval 4164 to 4200; sequence LEGTCARNPCQHGGTCVDFWSWQQCQCMEGLTGKYCE. The 181-residue stretch at 4219 to 4399 folds into the Laminin G-like 2 domain; that stretch reads YHMSQSEKRE…KTDPSVKIGC (181 aa). Asparagine 4269 and asparagine 4314 each carry an N-linked (GlcNAc...) asparagine glycan. Cystine bridges form between cysteine 4366–cysteine 4399, cysteine 4431–cysteine 4442, cysteine 4436–cysteine 4452, and cysteine 4454–cysteine 4463. In terms of domain architecture, EGF-like 6 spans 4427–4464; sequence PPGDCASHPCQNGGSCEPGLLSGYTCSCPESHTGRTCE. Residues 4506–4526 traverse the membrane as a helical segment; the sequence is VPAIVGSCATALALLVLSLIL. Over 4527-4981 the chain is Cytoplasmic; that stretch reads CNQCRGKMPK…AKDGEAEQYV (455 aa). 5 disordered regions span residues 4535 to 4585, 4677 to 4713, 4753 to 4773, 4796 to 4911, and 4957 to 4981; these read PKNP…PDII, PSSY…KPSA, RRSK…SRLK, RLNT…PAAA, and AAGN…EQYV. A compositionally biased stretch (polar residues) spans 4677 to 4701; sequence PSSYGQGLRTSSLSHSACPTPNPLS. The necessary and sufficient for interaction with MPDZ stretch occupies residues 4708–4797; the sequence is FSKPSAFYRN…GLSIEEVERL (90 aa). The segment covering 4811–4823 has biased composition (basic and acidic residues); that stretch reads DHGRSSSEEDCRR. The residue at position 4878 (serine 4878) is a Phosphoserine. Residues 4971–4981 are compositionally biased toward basic and acidic residues; sequence AAKDGEAEQYV.

In terms of assembly, heterophilic interaction with DCHS1; this interaction affects their respective protein levels. Interacts (via cytoplasmic domain) with MPDZ. Forms a complex with PALS1 and MPDZ. Widely expressed.

It localises to the membrane. Its function is as follows. Cadherins are cell-cell interaction molecules. FAT4 plays a role in the maintenance of planar cell polarity as well as in inhibition of YAP1-mediated neuroprogenitor cell proliferation and differentiation. The sequence is that of Protocadherin Fat 4 (Fat4) from Mus musculus (Mouse).